The following is a 448-amino-acid chain: Zinc finger and BTB domain-containing protein 14 (448 aa).

The BTB domain maps to 36–102 (CDIAIVVEDV…MYTAKISVKK (67 aa)). The short motif at 50-66 (HRCVLAACSTYFKKLFK) is the Nuclear localization signal element. The interval 130–193 (VSSPEENTQS…QEDGKSPTTT (64 aa)) is disordered. Positions 156-167 (DTQDDEVEEIGD) are enriched in acidic residues. 5 C2H2-type zinc fingers span residues 275 to 302 (IVCQ…ADRP), 303 to 330 (FVCE…GYKP), 331 to 358 (YSCE…NERP), 359 to 386 (FACH…GEKP), and 387 to 415 (FVCG…ERKQ). A compositionally biased stretch (basic and acidic residues) spans 404-415 (RHENNMHSERKQ). The tract at residues 404–425 (RHENNMHSERKQVTTANSIQSE) is disordered. The span at 416-425 (VTTANSIQSE) shows a compositional bias: polar residues.

The protein belongs to the krueppel C2H2-type zinc-finger protein family. As to quaternary structure, interacts with ZBTB21.

It is found in the nucleus. Functionally, transcriptional activator of the dopamine transporter (DAT), binding it's promoter at the consensus sequence 5'-CCTGCACAGTTCACGGA-3'. Binds to 5'-d(GCC)(n)-3' trinucleotide repeats in promoter regions and acts as a repressor of the FMR1 gene. Transcriptional repressor of MYC and thymidine kinase promoters. The chain is Zinc finger and BTB domain-containing protein 14 (ZBTB14) from Gallus gallus (Chicken).